The sequence spans 412 residues: ATP phosphoribosyltransferase regulatory subunit (412 aa).

It belongs to the class-II aminoacyl-tRNA synthetase family. HisZ subfamily. As to quaternary structure, heteromultimer composed of HisG and HisZ subunits.

The protein resides in the cytoplasm. It functions in the pathway amino-acid biosynthesis; L-histidine biosynthesis; L-histidine from 5-phospho-alpha-D-ribose 1-diphosphate: step 1/9. Its function is as follows. Required for the first step of histidine biosynthesis. May allow the feedback regulation of ATP phosphoribosyltransferase activity by histidine. The protein is ATP phosphoribosyltransferase regulatory subunit of Dehalococcoides mccartyi (strain CBDB1).